The sequence spans 59 residues: Conotoxin ViVB (59 aa).

The signal sequence occupies residues 1–22; sequence MRCVPVFIILLLLIPSAPSAAV. Positions 23-46 are excised as a propeptide; the sequence is QPKTEKDDVPLASFHDSAMRILSR. Pyrrolidone carboxylic acid is present on Gln-47. Val-58 carries the valine amide modification.

Post-translationally, contains 2 disulfide bonds that can be either 'C1-C3, C2-C4' or 'C1-C4, C2-C3', since these disulfide connectivities have been observed for conotoxins with cysteine framework V (for examples, see AC P0DQQ7 and AC P81755). As to expression, expressed by the venom duct.

Its subcellular location is the secreted. This chain is Conotoxin ViVB, found in Conus virgo (Virgin cone).